The sequence spans 252 residues: TVP38/TMEM64 family membrane protein Mb1528c (252 aa).

A run of 6 helical transmembrane segments spans residues 32–52 (IVGT…VPVP), 64–84 (LGAW…VPPF), 88–108 (AFTL…IAVV), 149–169 (WLAI…INYA), 177–197 (ILSF…AVVI), and 209–229 (LLIL…VYEI).

It belongs to the TVP38/TMEM64 family.

It localises to the cell membrane. The chain is TVP38/TMEM64 family membrane protein Mb1528c from Mycobacterium bovis (strain ATCC BAA-935 / AF2122/97).